A 412-amino-acid chain; its full sequence is Palmitoyl-acyl carrier protein thioesterase, chloroplastic (412 aa).

Composition is skewed to polar residues over residues 1–19 (MVAT…SSLD) and 27–40 (IGST…SAPN). The transit peptide at 1–49 (MVATSATSSFFPVPSSSLDPNGKGNKIGSTNLAGLNSAPNSGRMKVKPN) directs the protein to the chloroplast. Positions 1 to 64 (MVATSATSSF…KINGKKVGLP (64 aa)) are disordered. Catalysis depends on residues asparagine 315, histidine 317, and cysteine 352.

This sequence belongs to the acyl-ACP thioesterase family. Highly expressed in flowers. Expressed in roots, leaves, stems, siliques and seeds.

It is found in the plastid. Its subcellular location is the chloroplast. The enzyme catalyses hexadecanoyl-[ACP] + H2O = hexadecanoate + holo-[ACP] + H(+). Plays an essential role in chain termination during de novo fatty acid synthesis. Possesses high thioesterase activity for palmitoyl-ACP versus other acyl-ACPs. Substrate preference is 16:0 &gt; 18:1 &gt; 18:0 &gt; 16:1. Plays an essential role in the supply of saturated fatty acids necessary for plant growth and seed development. Contributes to 16:0 production particularly in flowers. May be involved in the synthesis of long chain fatty acid. This chain is Palmitoyl-acyl carrier protein thioesterase, chloroplastic (FATB), found in Arabidopsis thaliana (Mouse-ear cress).